Here is a 417-residue protein sequence, read N- to C-terminus: D-galactonate dehydratase family member SeV_A0456 (417 aa).

Glutamine 43 and histidine 127 together coordinate substrate. Tyrosine 158 acts as the Proton donor/acceptor in catalysis. Aspartate 223 lines the Mg(2+) pocket. The Proton donor/acceptor role is filled by histidine 225. The Mg(2+) site is built by glutamate 249 and glutamate 275. Residues glutamate 275, arginine 296, histidine 325, aspartate 329, and glutamate 352 each contribute to the substrate site.

Belongs to the mandelate racemase/muconate lactonizing enzyme family. GalD subfamily. Mg(2+) is required as a cofactor.

The catalysed reaction is D-gluconate = 2-dehydro-3-deoxy-D-gluconate + H2O. In terms of biological role, has low D-gluconate dehydratase activity (in vitro), suggesting that it has no significant role in D-gluconate degradation in vivo. Has no detectable activity with a panel of 70 other acid sugars (in vitro). The chain is D-galactonate dehydratase family member SeV_A0456 from Salmonella virchow (strain SL491).